The chain runs to 365 residues: Sulfate/thiosulfate import ATP-binding protein CysA (365 aa).

The ABC transporter domain maps to 3–237 (IEIANIKKSF…PATRFVLEFM (235 aa)). 35–42 (GPSGSGKT) lines the ATP pocket.

This sequence belongs to the ABC transporter superfamily. Sulfate/tungstate importer (TC 3.A.1.6) family. The complex is composed of two ATP-binding proteins (CysA), two transmembrane proteins (CysT and CysW) and a solute-binding protein (CysP).

Its subcellular location is the cell inner membrane. The enzyme catalyses sulfate(out) + ATP + H2O = sulfate(in) + ADP + phosphate + H(+). The catalysed reaction is thiosulfate(out) + ATP + H2O = thiosulfate(in) + ADP + phosphate + H(+). In terms of biological role, part of the ABC transporter complex CysAWTP involved in sulfate/thiosulfate import. Responsible for energy coupling to the transport system. The sequence is that of Sulfate/thiosulfate import ATP-binding protein CysA from Escherichia coli (strain K12).